The sequence spans 335 residues: Protease HtpX homolog (335 aa).

Transmembrane regions (helical) follow at residues 9–29 (VYMM…STIA), 42–62 (LFTS…AIIY), and 64–84 (ILAY…LLII). Residue His168 coordinates Zn(2+). The active site involves Glu169. His172 serves as a coordination point for Zn(2+). Helical transmembrane passes span 179-199 (AVML…YALL) and 213-233 (AAIG…VLAF). Glu238 provides a ligand contact to Zn(2+).

The protein belongs to the peptidase M48B family. Requires Zn(2+) as cofactor.

The protein localises to the cell membrane. This chain is Protease HtpX homolog, found in Archaeoglobus fulgidus (strain ATCC 49558 / DSM 4304 / JCM 9628 / NBRC 100126 / VC-16).